Consider the following 143-residue polypeptide: Hemoglobin subunit alpha-1 (143 aa).

Ser2 is subject to N-acetylserine. In terms of domain architecture, Globin spans 2 to 143 (SLTEKDKAAV…VSLALAERYR (142 aa)). Residue His60 coordinates O2. His89 is a binding site for heme b.

It belongs to the globin family. Hb 1 is a heterotetramer of two alpha-1 and two beta chains. As to expression, red blood cells.

Involved in oxygen transport from gills to the various peripheral tissues. The sequence is that of Hemoglobin subunit alpha-1 (hba1) from Cottoperca gobio (Frogmouth).